Reading from the N-terminus, the 169-residue chain is 3-hydroxyanthranilate 3,4-dioxygenase (169 aa).

Arg-44 is an O2 binding site. The Fe cation site is built by His-48, Glu-54, and His-92. Glu-54 contacts substrate. The substrate site is built by Arg-96 and Glu-106. The a divalent metal cation site is built by Cys-121, Cys-124, Cys-158, and Cys-160.

It belongs to the 3-HAO family. Fe(2+) is required as a cofactor.

It is found in the cytoplasm. The catalysed reaction is 3-hydroxyanthranilate + O2 = (2Z,4Z)-2-amino-3-carboxymuconate 6-semialdehyde. It functions in the pathway cofactor biosynthesis; NAD(+) biosynthesis; quinolinate from L-kynurenine: step 3/3. Catalyzes the oxidative ring opening of 3-hydroxyanthranilate to 2-amino-3-carboxymuconate semialdehyde, which spontaneously cyclizes to quinolinate. The polypeptide is 3-hydroxyanthranilate 3,4-dioxygenase (Meyerozyma guilliermondii (strain ATCC 6260 / CBS 566 / DSM 6381 / JCM 1539 / NBRC 10279 / NRRL Y-324) (Yeast)).